A 336-amino-acid polypeptide reads, in one-letter code: Tyrosine recombinase XerC (336 aa).

The region spanning 14-106 (VARCRWLEPF…SVKSFYRFLL (93 aa)) is the Core-binding (CB) domain. The Tyr recombinase domain maps to 127-330 (KVPRFVSEEE…TFSRLKEIYD (204 aa)). Catalysis depends on residues R183, K207, H282, R285, and H308. Y317 serves as the catalytic O-(3'-phospho-DNA)-tyrosine intermediate.

The protein belongs to the 'phage' integrase family. XerC subfamily. In terms of assembly, forms a cyclic heterotetrameric complex composed of two molecules of XerC and two molecules of XerD.

The protein resides in the cytoplasm. Its function is as follows. Site-specific tyrosine recombinase, which acts by catalyzing the cutting and rejoining of the recombining DNA molecules. The XerC-XerD complex is essential to convert dimers of the bacterial chromosome into monomers to permit their segregation at cell division. It also contributes to the segregational stability of plasmids. The sequence is that of Tyrosine recombinase XerC from Chlorobaculum parvum (strain DSM 263 / NCIMB 8327) (Chlorobium vibrioforme subsp. thiosulfatophilum).